Here is a 507-residue protein sequence, read N- to C-terminus: Chromosomal replication initiator protein DnaA (507 aa).

The domain I, interacts with DnaA modulators stretch occupies residues 1–87 (MSVELWQQCV…IGSKRSSAPR (87 aa)). Residues 85-110 (APRAAPNAPLAAAQVSQAQANAAPAS) are compositionally biased toward low complexity. Residues 85 to 158 (APRAAPNAPL…QQAPVRAEQR (74 aa)) form a disordered region. The segment at 87–170 (RAAPNAPLAA…QVEGALKHTS (84 aa)) is domain II. Over residues 126–140 (QKTEEISEEPSRDSF) the composition is skewed to basic and acidic residues. The domain III, AAA+ region stretch occupies residues 171-387 (YLNRTFTFEN…GALKRVIAHS (217 aa)). ATP is bound by residues Gly-215, Gly-217, Lys-218, and Thr-219. The interval 388 to 507 (HFMGRDITIE…YKNLLRTLTT (120 aa)) is domain IV, binds dsDNA.

Belongs to the DnaA family. In terms of assembly, oligomerizes as a right-handed, spiral filament on DNA at oriC.

It localises to the cytoplasm. Functionally, plays an essential role in the initiation and regulation of chromosomal replication. ATP-DnaA binds to the origin of replication (oriC) to initiate formation of the DNA replication initiation complex once per cell cycle. Binds the DnaA box (a 9 base pair repeat at the origin) and separates the double-stranded (ds)DNA. Forms a right-handed helical filament on oriC DNA; dsDNA binds to the exterior of the filament while single-stranded (ss)DNA is stabiized in the filament's interior. The ATP-DnaA-oriC complex binds and stabilizes one strand of the AT-rich DNA unwinding element (DUE), permitting loading of DNA polymerase. After initiation quickly degrades to an ADP-DnaA complex that is not apt for DNA replication. Binds acidic phospholipids. The sequence is that of Chromosomal replication initiator protein DnaA from Pseudomonas fluorescens (strain Pf0-1).